A 274-amino-acid polypeptide reads, in one-letter code: NADPH-dependent 7-cyano-7-deazaguanine reductase (274 aa).

80–82 (VES) is a substrate binding site. 82-83 (SK) contributes to the NADPH binding site. The active-site Thioimide intermediate is the Cys-181. The active-site Proton donor is Asp-188. 220–221 (HE) is a substrate binding site. 249–250 (RG) lines the NADPH pocket.

Belongs to the GTP cyclohydrolase I family. QueF type 2 subfamily. As to quaternary structure, homodimer.

The protein resides in the cytoplasm. The enzyme catalyses 7-aminomethyl-7-carbaguanine + 2 NADP(+) = 7-cyano-7-deazaguanine + 2 NADPH + 3 H(+). Its pathway is tRNA modification; tRNA-queuosine biosynthesis. Functionally, catalyzes the NADPH-dependent reduction of 7-cyano-7-deazaguanine (preQ0) to 7-aminomethyl-7-deazaguanine (preQ1). This Paraburkholderia xenovorans (strain LB400) protein is NADPH-dependent 7-cyano-7-deazaguanine reductase.